The primary structure comprises 154 residues: NADPH-dependent 7-cyano-7-deazaguanine reductase (154 aa).

Residues 1 to 23 show a composition bias toward polar residues; that stretch reads MPNTDVSSLSMLGQQTETAQSPE. The segment at 1 to 26 is disordered; it reads MPNTDVSSLSMLGQQTETAQSPEQAV. Residue cysteine 52 is the Thioimide intermediate of the active site. The active-site Proton donor is the aspartate 59. Substrate is bound by residues 74-76 and 93-94; these read VES and HE.

This sequence belongs to the GTP cyclohydrolase I family. QueF type 1 subfamily.

It localises to the cytoplasm. It catalyses the reaction 7-aminomethyl-7-carbaguanine + 2 NADP(+) = 7-cyano-7-deazaguanine + 2 NADPH + 3 H(+). Its pathway is tRNA modification; tRNA-queuosine biosynthesis. Catalyzes the NADPH-dependent reduction of 7-cyano-7-deazaguanine (preQ0) to 7-aminomethyl-7-deazaguanine (preQ1). This is NADPH-dependent 7-cyano-7-deazaguanine reductase from Rhizobium leguminosarum bv. trifolii (strain WSM2304).